The sequence spans 247 residues: Probable transcriptional regulatory protein LPC_0711 (247 aa).

The protein belongs to the TACO1 family.

It localises to the cytoplasm. The sequence is that of Probable transcriptional regulatory protein LPC_0711 from Legionella pneumophila (strain Corby).